The following is a 252-amino-acid chain: Carboxy-S-adenosyl-L-methionine synthase (252 aa).

S-adenosyl-L-methionine contacts are provided by residues Tyr-45, 70-72 (GCS), 95-96 (DN), 123-124 (DI), Asn-138, and Arg-205.

Belongs to the class I-like SAM-binding methyltransferase superfamily. Cx-SAM synthase family. In terms of assembly, homodimer.

The enzyme catalyses prephenate + S-adenosyl-L-methionine = carboxy-S-adenosyl-L-methionine + 3-phenylpyruvate + H2O. In terms of biological role, catalyzes the conversion of S-adenosyl-L-methionine (SAM) to carboxy-S-adenosyl-L-methionine (Cx-SAM). This chain is Carboxy-S-adenosyl-L-methionine synthase, found in Photorhabdus laumondii subsp. laumondii (strain DSM 15139 / CIP 105565 / TT01) (Photorhabdus luminescens subsp. laumondii).